Reading from the N-terminus, the 427-residue chain is UDP-N-acetylglucosamine 1-carboxyvinyltransferase 1 (427 aa).

Residue 23–24 coordinates phosphoenolpyruvate; that stretch reads KN. Arginine 96 contributes to the UDP-N-acetyl-alpha-D-glucosamine binding site. Cysteine 120 (proton donor) is an active-site residue. Cysteine 120 bears the 2-(S-cysteinyl)pyruvic acid O-phosphothioketal mark. Residues 125 to 129, aspartate 309, and valine 331 each bind UDP-N-acetyl-alpha-D-glucosamine; that span reads RPIDL.

Belongs to the EPSP synthase family. MurA subfamily.

It localises to the cytoplasm. It catalyses the reaction phosphoenolpyruvate + UDP-N-acetyl-alpha-D-glucosamine = UDP-N-acetyl-3-O-(1-carboxyvinyl)-alpha-D-glucosamine + phosphate. The protein operates within cell wall biogenesis; peptidoglycan biosynthesis. Its function is as follows. Cell wall formation. Adds enolpyruvyl to UDP-N-acetylglucosamine. This Streptococcus pneumoniae (strain ATCC BAA-255 / R6) protein is UDP-N-acetylglucosamine 1-carboxyvinyltransferase 1.